The primary structure comprises 1637 residues: Probable serine/threonine-protein kinase gdt2 (1637 aa).

The N-terminal stretch at 1–19 (MNYILYILLILIIFSINNT) is a signal peptide. The Extracellular segment spans residues 20 to 896 (FSIGSFVYTP…IPVEKINLLP (877 aa)). A helical membrane pass occupies residues 897–917 (IIVPICVTVLVLLSILIVFFG). Residues 918–1637 (ARYYKHKKRR…NNNNNNNNNN (720 aa)) lie on the Cytoplasmic side of the membrane. The segment covering 977–990 (SDIQTQSENNNLEP) has biased composition (polar residues). Positions 977 to 1000 (SDIQTQSENNNLEPTTVETTTTTT) are disordered. Residues 991 to 1000 (TTVETTTTTT) are compositionally biased toward low complexity. In terms of domain architecture, Protein kinase spans 1290–1547 (IIIKNYISEG…LSKYLKHLLK (258 aa)). Residues 1296–1304 (ISEGTFGIV) and Lys-1317 each bind ATP. Asp-1408 serves as the catalytic Proton acceptor. The interval 1557 to 1637 (DKDKKNKKKN…NNNNNNNNNN (81 aa)) is disordered. Low complexity-rich tracts occupy residues 1568–1589 (NNNN…NNNN) and 1597–1637 (NNNI…NNNN).

The protein in the N-terminal section; belongs to the GDT family. It in the C-terminal section; belongs to the protein kinase superfamily. TKL Ser/Thr protein kinase family.

It localises to the membrane. The catalysed reaction is L-seryl-[protein] + ATP = O-phospho-L-seryl-[protein] + ADP + H(+). It carries out the reaction L-threonyl-[protein] + ATP = O-phospho-L-threonyl-[protein] + ADP + H(+). Regulates the transition between growth and differentiation. In Dictyostelium discoideum (Social amoeba), this protein is Probable serine/threonine-protein kinase gdt2 (gdt2).